We begin with the raw amino-acid sequence, 188 residues long: MKLIVGLGNPGNEYRFTRHNAGFLAIDKICEKLNISLNKEKFNGEFAVSDGFILAKPLTYMNKSGDFVYSIASFYKINPSDIIVIYDDLSFSIGQAAIKIGGSSAGHKGIERLMSKFSSNDFKRIRVGIGVNSGTTIKDYVLSLFTKDEMIVVEEVLEKVADAAISLVYNDVNFVMNKFNTDNKKRVI.

Tyrosine 14 serves as a coordination point for tRNA. Residue histidine 19 is the Proton acceptor of the active site. Tyrosine 60 and asparagine 62 together coordinate tRNA.

Belongs to the PTH family. Monomer.

The protein resides in the cytoplasm. The catalysed reaction is an N-acyl-L-alpha-aminoacyl-tRNA + H2O = an N-acyl-L-amino acid + a tRNA + H(+). In terms of biological role, hydrolyzes ribosome-free peptidyl-tRNAs (with 1 or more amino acids incorporated), which drop off the ribosome during protein synthesis, or as a result of ribosome stalling. Catalyzes the release of premature peptidyl moieties from peptidyl-tRNA molecules trapped in stalled 50S ribosomal subunits, and thus maintains levels of free tRNAs and 50S ribosomes. This chain is Peptidyl-tRNA hydrolase, found in Mycoplasmopsis agalactiae (strain NCTC 10123 / CIP 59.7 / PG2) (Mycoplasma agalactiae).